Reading from the N-terminus, the 175-residue chain is MYHVVAATTNPAKIKAISLAFDDVYGPGQYRIEGINVDSGVPLQPIGSTETRTGARQRVSNARQMRPEADFWVGVEAGIEDNMTFAWMVIEHLQWRGESRSASLMLPDIILQGIRQGRELGDEMADLTGISNVKHKGGAIGIFTDGKLTRTSVYHQALLLALVPFNNEIYQRPAQ.

8 to 13 (TTNPAK) is a substrate binding site. Residues Asp-38 and Glu-68 each coordinate Mg(2+). Residue 68–69 (EA) coordinates substrate.

Belongs to the YjjX NTPase family. In terms of assembly, homodimer. It depends on Mg(2+) as a cofactor. Mn(2+) is required as a cofactor.

The enzyme catalyses XTP + H2O = XDP + phosphate + H(+). It catalyses the reaction ITP + H2O = IDP + phosphate + H(+). Phosphatase that hydrolyzes non-canonical purine nucleotides such as XTP and ITP to their respective diphosphate derivatives. Probably excludes non-canonical purines from DNA/RNA precursor pool, thus preventing their incorporation into DNA/RNA and avoiding chromosomal lesions. This chain is Inosine/xanthosine triphosphatase, found in Yersinia enterocolitica serotype O:8 / biotype 1B (strain NCTC 13174 / 8081).